The sequence spans 58 residues: Large ribosomal subunit protein bL32 (58 aa).

Basic residues predominate over residues 1–19; it reads MAVPKKRTSKSKKNMRKAN. The tract at residues 1–58 is disordered; it reads MAVPKKRTSKSKKNMRKANWKNQAKLAAKKALSLGKSVETQRSHSFVHPRYEEEEEED. Residues 20-32 show a composition bias toward low complexity; the sequence is WKNQAKLAAKKAL.

Belongs to the bacterial ribosomal protein bL32 family.

The chain is Large ribosomal subunit protein bL32 from Trichodesmium erythraeum (strain IMS101).